Consider the following 185-residue polypeptide: Large ribosomal subunit protein eL19 (185 aa).

Positions 152 to 185 (SDKLTSQQEARRAKNTASRAKRNEKAQIVAKVDV) are disordered.

The protein belongs to the eukaryotic ribosomal protein eL19 family.

In Tetrahymena thermophila (strain SB210), this protein is Large ribosomal subunit protein eL19 (RPL19).